We begin with the raw amino-acid sequence, 454 residues long: tRNA modification GTPase MnmE (454 aa).

(6S)-5-formyl-5,6,7,8-tetrahydrofolate is bound by residues R23, E80, and K120. The region spanning 216–377 (GMKVVIAGRP…LRNHLKQSMG (162 aa)) is the TrmE-type G domain. Residue N226 participates in K(+) binding. Residues 226–231 (NAGKSS), 245–251 (TDIAGTT), 270–273 (DTAG), 335–338 (NKAD), and 358–360 (SAR) each bind GTP. Residue S230 coordinates Mg(2+). 3 residues coordinate K(+): T245, I247, and T250. T251 provides a ligand contact to Mg(2+). Residue K454 coordinates (6S)-5-formyl-5,6,7,8-tetrahydrofolate.

Belongs to the TRAFAC class TrmE-Era-EngA-EngB-Septin-like GTPase superfamily. TrmE GTPase family. In terms of assembly, homodimer. Heterotetramer of two MnmE and two MnmG subunits. Requires K(+) as cofactor.

The protein localises to the cytoplasm. In terms of biological role, exhibits a very high intrinsic GTPase hydrolysis rate. Involved in the addition of a carboxymethylaminomethyl (cmnm) group at the wobble position (U34) of certain tRNAs, forming tRNA-cmnm(5)s(2)U34. In Salmonella gallinarum (strain 287/91 / NCTC 13346), this protein is tRNA modification GTPase MnmE.